The sequence spans 72 residues: Hirudin variant-2 (72 aa).

An N-terminal signal peptide occupies residues 1-7; sequence AICVSQA. The segment at 8 to 10 is interaction with thrombin active site; that stretch reads ITY. Disulfide bonds link Cys-13-Cys-21, Cys-23-Cys-35, and Cys-29-Cys-46. Residues 47–72 form a disordered region; that stretch reads VTGEGTPNPESHNNGDFEEIPEEYLQ. Thr-52 carries an O-linked (GalNAc...) threonine glycan. The tract at residues 62–72 is interaction with fibrinogen-binding exosite of thrombin; that stretch reads DFEEIPEEYLQ. Residues 62–72 show a composition bias toward acidic residues; sequence DFEEIPEEYLQ. Residue Tyr-70 is modified to Sulfotyrosine.

It belongs to the protease inhibitor I14 (hirudin) family.

The protein resides in the secreted. Its function is as follows. Hirudin is a potent thrombin-specific protease inhibitor. It forms a stable non-covalent complex with alpha-thrombin, thereby abolishing its ability to cleave fibrinogen. This is Hirudin variant-2 from Hirudo medicinalis (Medicinal leech).